The sequence spans 334 residues: DNA-directed RNA polymerase subunit alpha (334 aa).

Residues 1-232 form an alpha N-terminal domain (alpha-NTD) region; that stretch reads MIREKLKVST…DLFIPFLHAE (232 aa). Residues 267-334 form an alpha C-terminal domain (alpha-CTD) region; it reads QKEITLKSIF…NILQIENHFV (68 aa).

Belongs to the RNA polymerase alpha chain family. As to quaternary structure, in plastids the minimal PEP RNA polymerase catalytic core is composed of four subunits: alpha, beta, beta', and beta''. When a (nuclear-encoded) sigma factor is associated with the core the holoenzyme is formed, which can initiate transcription.

It localises to the plastid. It is found in the chloroplast. It catalyses the reaction RNA(n) + a ribonucleoside 5'-triphosphate = RNA(n+1) + diphosphate. Its function is as follows. DNA-dependent RNA polymerase catalyzes the transcription of DNA into RNA using the four ribonucleoside triphosphates as substrates. The polypeptide is DNA-directed RNA polymerase subunit alpha (Pisum sativum (Garden pea)).